A 225-amino-acid polypeptide reads, in one-letter code: Glutathione S-transferase zeta class (225 aa).

Positions 10–91 (PKLKLYSYFR…YLEEKYPEHP (82 aa)) constitute a GST N-terminal domain. Residues 20 to 25 (SSCSFR), Q49, V63, 75 to 76 (DS), Q115, and 119 to 121 (NLA) each bind glutathione. Residues 96–221 (DIHKKAINYQ…MPDKQPDSTS (126 aa)) form the GST C-terminal domain.

It belongs to the GST superfamily. Zeta family.

Its subcellular location is the cytoplasm. It catalyses the reaction RX + glutathione = an S-substituted glutathione + a halide anion + H(+). The polypeptide is Glutathione S-transferase zeta class (Euphorbia esula (Leafy spurge)).